The primary structure comprises 1058 residues: Kinesin-like protein KIN-7M, chloroplastic (1058 aa).

The N-terminal 60 residues, 1 to 60 (MASSSSRTRSRSPFSHRRPPSPYSSASSTSSSLINNRLLPRSSSTPTSTVYNSGGVTGSR), are a transit peptide targeting the chloroplast. The tract at residues 1 to 92 (MASSSSRTRS…QSYPSEGLIG (92 aa)) is disordered. A compositionally biased stretch (basic residues) spans 8–19 (TRSRSPFSHRRP). A compositionally biased stretch (low complexity) spans 23–49 (YSSASSTSSSLINNRLLPRSSSTPTST). Polar residues predominate over residues 50–70 (VYNSGGVTGSRSMSITRTISD). One can recognise a Kinesin motor domain in the interval 104 to 421 (SISVTVRFRP…LKFASRAKRI (318 aa)). 184–191 (GVTSSGKT) is a binding site for ATP. Positions 422-509 (EINASRNKII…QKLTKLILVS (88 aa)) form a coiled coil. The tract at residues 549–578 (PSSTLSLASDARRSSSKFKDENSPVGSRAE) is disordered. Positions 558–570 (DARRSSSKFKDEN) are enriched in basic and acidic residues. Coiled-coil stretches lie at residues 621–658 (PENS…ASIA), 704–826 (NNEL…AQKR), 873–904 (LEAA…LEND), and 935–999 (KEDE…SQAA). The span at 824–838 (QKRNNNSMNSAANRN) shows a compositional bias: low complexity. Residues 824-847 (QKRNNNSMNSAANRNGTRPGRKAR) are disordered. Residues 922 to 946 (ALSIQKSDEAEPAKEDEVTELDNKN) are disordered. A compositionally biased stretch (basic and acidic residues) spans 927-946 (KSDEAEPAKEDEVTELDNKN). The RING-type zinc finger occupies 1011–1046 (CKVCFESPTATILLPCRHFCLCKSCSLACSECPICR).

Belongs to the TRAFAC class myosin-kinesin ATPase superfamily. Kinesin family. KIN-7 subfamily.

Its subcellular location is the plastid. It localises to the chloroplast. The sequence is that of Kinesin-like protein KIN-7M, chloroplastic from Arabidopsis thaliana (Mouse-ear cress).